We begin with the raw amino-acid sequence, 122 residues long: Large ribosomal subunit protein uL22 (122 aa).

This sequence belongs to the universal ribosomal protein uL22 family. Part of the 50S ribosomal subunit.

In terms of biological role, this protein binds specifically to 23S rRNA; its binding is stimulated by other ribosomal proteins, e.g. L4, L17, and L20. It is important during the early stages of 50S assembly. It makes multiple contacts with different domains of the 23S rRNA in the assembled 50S subunit and ribosome. The globular domain of the protein is located near the polypeptide exit tunnel on the outside of the subunit, while an extended beta-hairpin is found that lines the wall of the exit tunnel in the center of the 70S ribosome. This Prochlorococcus marinus (strain MIT 9303) protein is Large ribosomal subunit protein uL22.